The chain runs to 437 residues: MSIDINWRTATSGPDGEALAERIRSFIHDRFQQVALPRFIRSVQVHSFDFGTIPPELEIKDFCEPFADFYEEDDDADTSDVSEDLLSEHSSQWDRTHSELNEPPYREESAMNHGLRDPFHEGFPPSPLRSPLGEHLNPHFLPRAGTPGIPGGTSNLGYHLMSLGGLSGTQTPLAAVAGGNPFASGWSDSGMGFGNRGRSERQGPIPQHRPEPEIDTSNSTSRPSTANTLPSHLSESNNLNADGATGRNERGSLHNGDPLADHTCSGHLPLPPRMRERRPEDFQVLCHAKYAGDVRLSLTAEILLDYPMPSFVGLPLKLNVTGITFDGVAVVAYIRKRVHFCFLSAEDADALIGSEQQQESGGDDHRPRSGADSSAHTSQKRQGGLLQEIRVESEIGRKENGKQVLKNVGKVERFVLAQVRRIFEEELVYPSFWTFLI.

Positions 1–437 (MSIDINWRTA…VYPSFWTFLI (437 aa)) constitute an SMP-LTD domain. The span at 73-85 (DDDADTSDVSEDL) shows a compositional bias: acidic residues. 3 disordered regions span residues 73–101 (DDDADTSDVSEDLLSEHSSQWDRTHSELN), 187–274 (SDSG…PPRM), and 354–384 (SEQQQESGGDDHRPRSGADSSAHTSQKRQGG). Residues 91 to 101 (SQWDRTHSELN) are compositionally biased toward basic and acidic residues. Polar residues-rich tracts occupy residues 215 to 240 (DTSNSTSRPSTANTLPSHLSESNNLN) and 371 to 381 (ADSSAHTSQKR).

It belongs to the MDM12 family. In terms of assembly, component of the ER-mitochondria encounter structure (ERMES) or MDM complex, composed of mmm1, mdm10, mdm12 and mdm34. A mmm1 homodimer associates with one molecule of mdm12 on each side in a pairwise head-to-tail manner, and the SMP-LTD domains of mmm1 and mdm12 generate a continuous hydrophobic tunnel for phospholipid trafficking.

The protein resides in the mitochondrion outer membrane. Its subcellular location is the endoplasmic reticulum membrane. In terms of biological role, component of the ERMES/MDM complex, which serves as a molecular tether to connect the endoplasmic reticulum (ER) and mitochondria. Components of this complex are involved in the control of mitochondrial shape and protein biogenesis, and function in nonvesicular lipid trafficking between the ER and mitochondria. Mdm12 is required for the interaction of the ER-resident membrane protein mmm1 and the outer mitochondrial membrane-resident beta-barrel protein mdm10. The mdm12-mmm1 subcomplex functions in the major beta-barrel assembly pathway that is responsible for biogenesis of all mitochondrial outer membrane beta-barrel proteins, and acts in a late step after the SAM complex. The mdm10-mdm12-mmm1 subcomplex further acts in the TOM40-specific pathway after the action of the mdm12-mmm1 complex. Essential for establishing and maintaining the structure of mitochondria and maintenance of mtDNA nucleoids. This is Mitochondrial distribution and morphology protein 12 from Aspergillus clavatus (strain ATCC 1007 / CBS 513.65 / DSM 816 / NCTC 3887 / NRRL 1 / QM 1276 / 107).